Here is a 210-residue protein sequence, read N- to C-terminus: Scoloptoxin SSD552 (210 aa).

An N-terminal signal peptide occupies residues Met1–Gly23.

Post-translationally, contains 3 disulfide bonds. Expressed by the venom gland.

It is found in the secreted. This is Scoloptoxin SSD552 from Scolopendra dehaani (Thai centipede).